A 260-amino-acid polypeptide reads, in one-letter code: UPF0246 protein Bcen2424_2223 (260 aa).

This sequence belongs to the UPF0246 family.

The polypeptide is UPF0246 protein Bcen2424_2223 (Burkholderia cenocepacia (strain HI2424)).